A 566-amino-acid chain; its full sequence is Hexose transporter 2 (566 aa).

The disordered stretch occupies residues Met1–Val39. The span at Glu16–Gly32 shows a compositional bias: polar residues. The Cytoplasmic portion of the chain corresponds to Ser22–Thr61. A helical membrane pass occupies residues Val62 to Thr82. The Extracellular segment spans residues Ile83 to Thr112. Asn88 carries an N-linked (GlcNAc...) asparagine glycan. Residues Gly113 to Leu133 traverse the membrane as a helical segment. At Gly134–Arg140 the chain is on the cytoplasmic side. Residues Ile141–Ile161 form a helical membrane-spanning segment. The Extracellular segment spans residues Asp162–Gln166. The chain crosses the membrane as a helical span at residues Tyr167–Met187. Residues Leu188 to Arg198 lie on the Cytoplasmic side of the membrane. A helical membrane pass occupies residues Gly199 to Thr219. The Extracellular portion of the chain corresponds to Asn220–Arg233. A helical transmembrane segment spans residues Val234–Pro254. Residues Glu255–Gln333 are Cytoplasmic-facing. A helical membrane pass occupies residues Leu334 to Met353. Topologically, residues Asp354–Phe357 are extracellular. A helical transmembrane segment spans residues Glu358–Val378. Over Asp379–Lys385 the chain is Cytoplasmic. The helical transmembrane segment at Cys386–Val406 threads the bilayer. Residues Thr407–Met428 lie on the Extracellular side of the membrane. A helical transmembrane segment spans residues Ile429–Val449. The Cytoplasmic segment spans residues Val450–Ala465. A helical membrane pass occupies residues Ile466–Thr486. The Extracellular portion of the chain corresponds to Ser487–Tyr492. A helical transmembrane segment spans residues Tyr493–Pro513. Residues Glu514–Leu566 lie on the Cytoplasmic side of the membrane.

This sequence belongs to the major facilitator superfamily. Sugar transporter (TC 2.A.1.1) family.

Its subcellular location is the membrane. Probable glucose transporter. This is Hexose transporter 2 (KHT2) from Kluyveromyces lactis (Yeast).